A 405-amino-acid polypeptide reads, in one-letter code: Cysteine desulfurase IscS (405 aa).

Pyridoxal 5'-phosphate contacts are provided by residues alanine 75–threonine 76, asparagine 156, glutamine 184, and serine 204–histidine 206. Lysine 207 carries the N6-(pyridoxal phosphate)lysine modification. Threonine 244 serves as a coordination point for pyridoxal 5'-phosphate. Catalysis depends on cysteine 329, which acts as the Cysteine persulfide intermediate. Position 329 (cysteine 329) interacts with [2Fe-2S] cluster.

It belongs to the class-V pyridoxal-phosphate-dependent aminotransferase family. NifS/IscS subfamily. Homodimer. Forms a heterotetramer with IscU, interacts with other sulfur acceptors. Pyridoxal 5'-phosphate is required as a cofactor.

Its subcellular location is the cytoplasm. The enzyme catalyses (sulfur carrier)-H + L-cysteine = (sulfur carrier)-SH + L-alanine. The protein operates within cofactor biosynthesis; iron-sulfur cluster biosynthesis. Functionally, master enzyme that delivers sulfur to a number of partners involved in Fe-S cluster assembly, tRNA modification or cofactor biosynthesis. Catalyzes the removal of elemental sulfur atoms from cysteine to produce alanine. Functions as a sulfur delivery protein for Fe-S cluster synthesis onto IscU, an Fe-S scaffold assembly protein, as well as other S acceptor proteins. The polypeptide is Cysteine desulfurase IscS (Acinetobacter baumannii (strain AB307-0294)).